The primary structure comprises 465 residues: Probable zinc metalloprotease PTT_17836 (465 aa).

Positions 1-20 are cleaved as a signal peptide; it reads MRSASTLAVCAATLLQIACS. Residue Asn140 is glycosylated (N-linked (GlcNAc...) asparagine). Residues His163, Asp183, and Glu216 each coordinate Zn(2+). Asn231 carries an N-linked (GlcNAc...) asparagine glycan. Asp243 lines the Zn(2+) pocket. 6 N-linked (GlcNAc...) asparagine glycosylation sites follow: Asn272, Asn330, Asn378, Asn384, Asn421, and Asn426. The Fibronectin type-III domain occupies 371-464; it reads APTNVGVNTT…LPFPFGCARN (94 aa).

This sequence belongs to the peptidase M28 family. M28B subfamily. The cofactor is Zn(2+).

The protein resides in the secreted. The sequence is that of Probable zinc metalloprotease PTT_17836 from Pyrenophora teres f. teres (strain 0-1) (Barley net blotch fungus).